The sequence spans 927 residues: Nonsense-mediated mRNA decay factor SMG8 (927 aa).

Disordered stretches follow at residues 543 to 581 (NTGK…NTAS), 611 to 636 (QARS…DTEN), and 643 to 662 (QEPA…AVST). The segment covering 551–566 (QDEDAGEDEAEEEEGQ) has biased composition (acidic residues). The segment covering 613 to 633 (RSEQLSNSEQNTTRSGSSSVD) has biased composition (polar residues). Residues 644–654 (EPAKKEAREDV) are compositionally biased toward basic and acidic residues.

Belongs to the SMG8 family.

Involved in nonsense-mediated decay (NMD) of mRNAs containing premature stop codons. Probable component of kinase complex containing nonC and recruited to stalled ribosomes. The sequence is that of Nonsense-mediated mRNA decay factor SMG8 from Drosophila sechellia (Fruit fly).